The chain runs to 1167 residues: DNA-directed RNA polymerase subunit beta (1167 aa).

The protein belongs to the RNA polymerase beta chain family. As to quaternary structure, the RNAP catalytic core consists of 2 alpha, 1 beta, 1 beta' and 1 omega subunit. When a sigma factor is associated with the core the holoenzyme is formed, which can initiate transcription.

The enzyme catalyses RNA(n) + a ribonucleoside 5'-triphosphate = RNA(n+1) + diphosphate. In terms of biological role, DNA-dependent RNA polymerase catalyzes the transcription of DNA into RNA using the four ribonucleoside triphosphates as substrates. The sequence is that of DNA-directed RNA polymerase subunit beta from Mycolicibacterium vanbaalenii (strain DSM 7251 / JCM 13017 / BCRC 16820 / KCTC 9966 / NRRL B-24157 / PYR-1) (Mycobacterium vanbaalenii).